Reading from the N-terminus, the 122-residue chain is WUSCHEL-related homeobox 7 (122 aa).

The segment at residues 25–89 (AKCGRWNPTV…NHKARERQKC (65 aa)) is a DNA-binding region (homeobox; WUS-type). Over residues 98–111 (DHRQDTDLSKPRRD) the composition is skewed to basic and acidic residues. Residues 98-122 (DHRQDTDLSKPRRDNVRRHQLPAKG) form a disordered region. Residues 112–122 (NVRRHQLPAKG) are compositionally biased toward basic residues.

The protein belongs to the WUS homeobox family.

The protein localises to the nucleus. Functionally, potential transcription factor that plays a central role during developmental processes. This Arabidopsis thaliana (Mouse-ear cress) protein is WUSCHEL-related homeobox 7 (WOX7).